The sequence spans 176 residues: Macro domain-containing protein lmo2759 (176 aa).

In terms of domain architecture, Macro spans 1–175; that stretch reads MEITIVKGDI…LYNKLINSEV (175 aa).

Belongs to the MacroD-type family.

The polypeptide is Macro domain-containing protein lmo2759 (Listeria monocytogenes serovar 1/2a (strain ATCC BAA-679 / EGD-e)).